Here is a 461-residue protein sequence, read N- to C-terminus: Putative 2,3-dihydroxypropane-1-sulfonate exporter (461 aa).

The Cytoplasmic portion of the chain corresponds to 1–20 (MSHITTEDPATLRLPFKEKL). Residues 21 to 41 (SYGIGDLASNILLDIGTLYLL) form a helical membrane-spanning segment. At 42–47 (KFYTDV) the chain is on the periplasmic side. Residues 48-68 (LGLPGTYGGIIFLISKFFTAF) traverse the membrane as a helical segment. Residues 69 to 92 (TDMGTGIMLDSRRKIGPKGKFRPF) lie on the Cytoplasmic side of the membrane. The chain crosses the membrane as a helical span at residues 93-113 (ILYASFPVTLLAIANFVGTPF). The Periplasmic segment spans residues 114–123 (DVTGKTVMAT). A helical membrane pass occupies residues 124 to 144 (ILFMLYGLFFSMMNCSYGAMV). The Cytoplasmic segment spans residues 145 to 162 (PAITKNPNERASLAAWRQ). A helical membrane pass occupies residues 163 to 183 (GGATLGLLLCTVGFVPVMNLI). At 184–188 (EGNQQ) the chain is on the periplasmic side. A helical transmembrane segment spans residues 189 to 209 (LGYIFAATLFSLFGLLFMWIC). At 210-243 (YSGVKERYVETQPANPAQKPGLLQSFRAIAGNRP) the chain is on the cytoplasmic side. The helical transmembrane segment at 244–264 (LFILCIANLCTLGAFNVKLAI) threads the bilayer. At 265 to 276 (QVYYTQYVLNDP) the chain is on the periplasmic side. Residues 277–297 (ILLSYMGFFSMGCIFIGVFLM) form a helical membrane-spanning segment. Over 298 to 308 (PASVRRFGKKK) the chain is Cytoplasmic. A helical transmembrane segment spans residues 309 to 329 (VYIGGLLIWVLGDLLNYFFGG). Position 330 (glycine 330) is a topological domain, periplasmic. The chain crosses the membrane as a helical span at residues 331–351 (SVSFVAFSCLAFFGSAFVNSL). At 352–387 (NWALVSDTVEYGEWRTGVRSEGTVYTGFTFFRKVSQ) the chain is on the cytoplasmic side. Residues 388–408 (ALAGFFPGWMLTQIGYVPNVA) traverse the membrane as a helical segment. The Periplasmic portion of the chain corresponds to 409 to 419 (QADHTIEGLRQ). The chain crosses the membrane as a helical span at residues 420–440 (LIFIYPSALAVVTIVAMGCFY). Residues 441–461 (SLNEKMYVRIVEEIEARKRTA) lie on the Cytoplasmic side of the membrane.

The protein belongs to the sodium:galactoside symporter (TC 2.A.2) family.

Its subcellular location is the cell inner membrane. Its function is as follows. Could be involved in the export of 2,3-dihydroxypropane-1-sulfonate (DHPS). The sequence is that of Putative 2,3-dihydroxypropane-1-sulfonate exporter (yihP) from Escherichia coli (strain K12).